Consider the following 450-residue polypeptide: 3-phosphoshikimate 1-carboxyvinyltransferase (450 aa).

A disordered region spans residues M1 to R23. 3 residues coordinate 3-phosphoshikimate: K28, S29, and R33. K28 contributes to the phosphoenolpyruvate binding site. Phosphoenolpyruvate contacts are provided by G101 and R129. Residues S174, Q176, D327, and K354 each coordinate 3-phosphoshikimate. Q176 is a binding site for phosphoenolpyruvate. Residue D327 is the Proton acceptor of the active site. Residues R358 and R403 each contribute to the phosphoenolpyruvate site.

It belongs to the EPSP synthase family. In terms of assembly, monomer.

The protein resides in the cytoplasm. The catalysed reaction is 3-phosphoshikimate + phosphoenolpyruvate = 5-O-(1-carboxyvinyl)-3-phosphoshikimate + phosphate. It functions in the pathway metabolic intermediate biosynthesis; chorismate biosynthesis; chorismate from D-erythrose 4-phosphate and phosphoenolpyruvate: step 6/7. Functionally, catalyzes the transfer of the enolpyruvyl moiety of phosphoenolpyruvate (PEP) to the 5-hydroxyl of shikimate-3-phosphate (S3P) to produce enolpyruvyl shikimate-3-phosphate and inorganic phosphate. The chain is 3-phosphoshikimate 1-carboxyvinyltransferase from Roseobacter denitrificans (strain ATCC 33942 / OCh 114) (Erythrobacter sp. (strain OCh 114)).